The primary structure comprises 31 residues: Elongation factor Tu (31 aa).

Belongs to the GTP-binding elongation factor family. EF-Tu/EF-1A subfamily. Monomer.

It localises to the cytoplasm. In terms of biological role, this protein promotes the GTP-dependent binding of aminoacyl-tRNA to the A-site of ribosomes during protein biosynthesis. This chain is Elongation factor Tu (tuf), found in Streptomyces laurentii.